The chain runs to 168 residues: Probable acetolactate synthase small subunit (168 aa).

The ACT domain occupies 10-84 (IISALVEHKP…DVIKVRDLEP (75 aa)).

This sequence belongs to the acetolactate synthase small subunit family. In terms of assembly, dimer of large and small chains.

It carries out the reaction 2 pyruvate + H(+) = (2S)-2-acetolactate + CO2. The protein operates within amino-acid biosynthesis; L-isoleucine biosynthesis; L-isoleucine from 2-oxobutanoate: step 1/4. It functions in the pathway amino-acid biosynthesis; L-valine biosynthesis; L-valine from pyruvate: step 1/4. The chain is Probable acetolactate synthase small subunit (ilvH) from Methanothermobacter thermautotrophicus (strain ATCC 29096 / DSM 1053 / JCM 10044 / NBRC 100330 / Delta H) (Methanobacterium thermoautotrophicum).